Consider the following 412-residue polypeptide: Imidazolonepropionase (412 aa).

Residues His-76 and His-78 each coordinate Fe(3+). Residues His-76 and His-78 each coordinate Zn(2+). Positions 85, 148, and 181 each coordinate 4-imidazolone-5-propanoate. Tyr-148 contributes to the N-formimidoyl-L-glutamate binding site. Residue His-242 coordinates Fe(3+). Zn(2+) is bound at residue His-242. Glu-245 contacts 4-imidazolone-5-propanoate. A Fe(3+)-binding site is contributed by Asp-317. Asp-317 is a binding site for Zn(2+). N-formimidoyl-L-glutamate is bound by residues Asn-319 and Gly-321. Residue Ser-322 coordinates 4-imidazolone-5-propanoate.

The protein belongs to the metallo-dependent hydrolases superfamily. HutI family. It depends on Zn(2+) as a cofactor. The cofactor is Fe(3+).

Its subcellular location is the cytoplasm. The enzyme catalyses 4-imidazolone-5-propanoate + H2O = N-formimidoyl-L-glutamate. The protein operates within amino-acid degradation; L-histidine degradation into L-glutamate; N-formimidoyl-L-glutamate from L-histidine: step 3/3. Its function is as follows. Catalyzes the hydrolytic cleavage of the carbon-nitrogen bond in imidazolone-5-propanoate to yield N-formimidoyl-L-glutamate. It is the third step in the universal histidine degradation pathway. The polypeptide is Imidazolonepropionase (Staphylococcus saprophyticus subsp. saprophyticus (strain ATCC 15305 / DSM 20229 / NCIMB 8711 / NCTC 7292 / S-41)).